Here is a 531-residue protein sequence, read N- to C-terminus: Probable inactive beta-glucosidase 25 (531 aa).

The signal sequence occupies residues 1 to 24 (MALKAILFLGLFLVVIVSPITVYG). A beta-D-glucoside is bound by residues Gln53 and 202-203 (NE). Glu203 functions as the Proton donor in the catalytic mechanism. Cysteines 222 and 230 form a disulfide. A beta-D-glucoside is bound by residues Phe348 and 477 to 478 (EW).

The protein belongs to the glycosyl hydrolase 1 family.

This chain is Probable inactive beta-glucosidase 25, found in Arabidopsis thaliana (Mouse-ear cress).